We begin with the raw amino-acid sequence, 117 residues long: Immunoglobulin lambda variable 7-43 (117 aa).

Residues 1-19 (MAWTPLFLFLLTCCPGSNS) form the signal peptide. Residues 20 to 44 (QTVVTQEPSLTVSPGGTVTLTCASS) are framework-1. The Ig-like domain maps to 20–117 (QTVVTQEPSL…YCLLYYGGAQ (98 aa)). Cysteine 41 and cysteine 109 are joined by a disulfide. Residues 45–53 (TGAVTSGYY) are complementarity-determining-1. The framework-2 stretch occupies residues 54–70 (PNWFQQKPGQAPRALIY). The segment at 71 to 73 (STS) is complementarity-determining-2. The segment at 74–109 (NKHSWTPARFSGSLLGGKAALTLSGVQPEDEAEYYC) is framework-3. Positions 110 to 117 (LLYYGGAQ) are complementarity-determining-3.

Immunoglobulins are composed of two identical heavy chains and two identical light chains; disulfide-linked.

Its subcellular location is the secreted. The protein resides in the cell membrane. Functionally, v region of the variable domain of immunoglobulin light chains that participates in the antigen recognition. Immunoglobulins, also known as antibodies, are membrane-bound or secreted glycoproteins produced by B lymphocytes. In the recognition phase of humoral immunity, the membrane-bound immunoglobulins serve as receptors which, upon binding of a specific antigen, trigger the clonal expansion and differentiation of B lymphocytes into immunoglobulins-secreting plasma cells. Secreted immunoglobulins mediate the effector phase of humoral immunity, which results in the elimination of bound antigens. The antigen binding site is formed by the variable domain of one heavy chain, together with that of its associated light chain. Thus, each immunoglobulin has two antigen binding sites with remarkable affinity for a particular antigen. The variable domains are assembled by a process called V-(D)-J rearrangement and can then be subjected to somatic hypermutations which, after exposure to antigen and selection, allow affinity maturation for a particular antigen. This is Immunoglobulin lambda variable 7-43 from Homo sapiens (Human).